We begin with the raw amino-acid sequence, 927 residues long: Protein translocase subunit SecA (927 aa).

ATP contacts are provided by residues Q86, G104 to T108, and D494. Residues Y853 to R927 are disordered. Over residues G860–E879 the composition is skewed to basic and acidic residues. Positions R907–R927 are enriched in basic residues.

Belongs to the SecA family. As to quaternary structure, monomer and homodimer. Part of the essential Sec protein translocation apparatus which comprises SecA, SecYEG and auxiliary proteins SecDF. Other proteins may also be involved.

The protein localises to the cell membrane. It is found in the cytoplasm. It catalyses the reaction ATP + H2O + cellular proteinSide 1 = ADP + phosphate + cellular proteinSide 2.. Its function is as follows. Part of the Sec protein translocase complex. Interacts with the SecYEG preprotein conducting channel. Has a central role in coupling the hydrolysis of ATP to the transfer of proteins into and across the cell membrane, serving as an ATP-driven molecular motor driving the stepwise translocation of polypeptide chains across the membrane. The polypeptide is Protein translocase subunit SecA (Kocuria rhizophila (strain ATCC 9341 / DSM 348 / NBRC 103217 / DC2201)).